Reading from the N-terminus, the 110-residue chain is Nucleoid-associated protein RALTA_A1934 (110 aa).

The segment covering Thr88–Ser98 has biased composition (polar residues). Positions Thr88–Phe110 are disordered. A compositionally biased stretch (pro residues) spans Pro101–Phe110.

Belongs to the YbaB/EbfC family. As to quaternary structure, homodimer.

Its subcellular location is the cytoplasm. It localises to the nucleoid. Binds to DNA and alters its conformation. May be involved in regulation of gene expression, nucleoid organization and DNA protection. The sequence is that of Nucleoid-associated protein RALTA_A1934 from Cupriavidus taiwanensis (strain DSM 17343 / BCRC 17206 / CCUG 44338 / CIP 107171 / LMG 19424 / R1) (Ralstonia taiwanensis (strain LMG 19424)).